Consider the following 164-residue polypeptide: SsrA-binding protein (164 aa).

Residues 143–164 (HDKRQDEKQKSIKKEINSVLKR) are disordered. The segment covering 145–158 (KRQDEKQKSIKKEI) has biased composition (basic and acidic residues).

This sequence belongs to the SmpB family.

It is found in the cytoplasm. Its function is as follows. Required for rescue of stalled ribosomes mediated by trans-translation. Binds to transfer-messenger RNA (tmRNA), required for stable association of tmRNA with ribosomes. tmRNA and SmpB together mimic tRNA shape, replacing the anticodon stem-loop with SmpB. tmRNA is encoded by the ssrA gene; the 2 termini fold to resemble tRNA(Ala) and it encodes a 'tag peptide', a short internal open reading frame. During trans-translation Ala-aminoacylated tmRNA acts like a tRNA, entering the A-site of stalled ribosomes, displacing the stalled mRNA. The ribosome then switches to translate the ORF on the tmRNA; the nascent peptide is terminated with the 'tag peptide' encoded by the tmRNA and targeted for degradation. The ribosome is freed to recommence translation, which seems to be the essential function of trans-translation. The polypeptide is SsrA-binding protein (Prochlorococcus marinus (strain MIT 9312)).